Reading from the N-terminus, the 580-residue chain is Netrin-3 (580 aa).

The first 27 residues, 1–27, serve as a signal peptide directing secretion; that stretch reads MPGWPWGLLLTAGTLFAALSPGPPAPA. Residues 36–254 form the Laminin N-terminal domain; the sequence is APRGCVPGLV…AATDLQVGGR (219 aa). The disordered stretch occupies residues 62 to 83; that stretch reads PATRACDASDPRRAHSPALLTS. 15 cysteine pairs are disulfide-bonded: Cys92–Cys125, Cys255–Cys264, Cys257–Cys274, Cys276–Cys285, Cys288–Cys308, Cys311–Cys320, Cys313–Cys338, Cys341–Cys350, Cys353–Cys371, Cys374–Cys386, Cys376–Cys393, Cys395–Cys404, Cys407–Cys421, Cys441–Cys514, and Cys460–Cys577. N-linked (GlcNAc...) asparagine glycosylation is present at Asn104. 3 consecutive Laminin EGF-like domains span residues 255 to 308, 311 to 371, and 374 to 421; these read CKCN…SHAC, CSCN…RRAC, and CDCH…VAPC. Asn387 is a glycosylation site (N-linked (GlcNAc...) asparagine). An NTR domain is found at 441-577; the sequence is CDSHCKPARG…LQRRERRGRC (137 aa). The short motif at 500-502 is the Cell attachment site; atypical element; it reads RGS.

Spinal cord.

Its subcellular location is the secreted. It is found in the extracellular space. It localises to the extracellular matrix. In terms of biological role, netrins control guidance of CNS commissural axons and peripheral motor axons. This is Netrin-3 (NTN3) from Homo sapiens (Human).